We begin with the raw amino-acid sequence, 620 residues long: Glutathione-regulated potassium-efflux system protein KefC (620 aa).

12 helical membrane-spanning segments follow: residues H4–V24, L26–L46, S54–L74, G90–L110, V114–M134, F149–L169, M178–L198, V218–G238, G270–L290, L294–I314, W327–Q347, and S359–N379. Residues Q399 to T518 enclose the RCK N-terminal domain. Residues G597–S620 form a disordered region.

It belongs to the monovalent cation:proton antiporter 2 (CPA2) transporter (TC 2.A.37) family. KefC subfamily. Homodimer. Interacts with the regulatory subunit KefF.

It is found in the cell inner membrane. Pore-forming subunit of a potassium efflux system that confers protection against electrophiles. Catalyzes K(+)/H(+) antiport. This chain is Glutathione-regulated potassium-efflux system protein KefC, found in Escherichia coli O139:H28 (strain E24377A / ETEC).